Consider the following 339-residue polypeptide: DNA-directed RNA polymerase subunit alpha (339 aa).

Residues 1–233 are alpha N-terminal domain (alpha-NTD); the sequence is MVREKVRIST…DLFIPFLHAE (233 aa). Positions 267–339 are alpha C-terminal domain (alpha-CTD); the sequence is IALKSIFIDQ…FTINLPKNKF (73 aa).

It belongs to the RNA polymerase alpha chain family. As to quaternary structure, in plastids the minimal PEP RNA polymerase catalytic core is composed of four subunits: alpha, beta, beta', and beta''. When a (nuclear-encoded) sigma factor is associated with the core the holoenzyme is formed, which can initiate transcription.

It is found in the plastid. Its subcellular location is the chloroplast. It catalyses the reaction RNA(n) + a ribonucleoside 5'-triphosphate = RNA(n+1) + diphosphate. In terms of biological role, DNA-dependent RNA polymerase catalyzes the transcription of DNA into RNA using the four ribonucleoside triphosphates as substrates. The sequence is that of DNA-directed RNA polymerase subunit alpha from Populus alba (White poplar).